Consider the following 225-residue polypeptide: UPF0758 protein NMCC_1157 (225 aa).

An MPN domain is found at 102–224 (VLSDPDTVAD…VRSFRQLGLM (123 aa)). Residues His173, His175, and Asp186 each contribute to the Zn(2+) site. Positions 173–186 (HNHPGGSPEPSQED) match the JAMM motif motif.

This sequence belongs to the UPF0758 family.

In Neisseria meningitidis serogroup C (strain 053442), this protein is UPF0758 protein NMCC_1157.